A 458-amino-acid chain; its full sequence is Biphenyl dioxygenase subunit alpha (458 aa).

A Rieske domain is found at 58–156; that stretch reads WLLLGHESHV…KEGDCGFDKA (99 aa). Cys100, His102, Cys120, and His123 together coordinate [2Fe-2S] cluster. Residues His233 and His239 each coordinate Fe cation.

The protein belongs to the bacterial ring-hydroxylating dioxygenase alpha subunit family. As to quaternary structure, heterohexamer consisting of three BphA subunits and three BphE subunits. A ferredoxin (BphF) and a ferredoxin reductase (BphG) must be present to obtain activity. It depends on [2Fe-2S] cluster as a cofactor. Fe cation is required as a cofactor.

It catalyses the reaction biphenyl + NADH + O2 + H(+) = (2R,3S)-3-phenylcyclohexa-3,5-diene-1,2-diol + NAD(+). It functions in the pathway xenobiotic degradation; biphenyl degradation; 2-hydroxy-2,4-pentadienoate and benzoate from biphenyl: step 1/4. The sequence is that of Biphenyl dioxygenase subunit alpha (bphA) from Metapseudomonas furukawaii (Pseudomonas furukawaii).